Consider the following 245-residue polypeptide: MKKYDRKIVLDIETTGMNPAGCFYKNHKIIEIGAVEMINNVFTGNNFHSYIQPNRLIDKQSFKIHGITDNFLLDKPKFHEISVKFLEYITNSDLIIHNAKFDVGFINYELNMINSDKRKISDYCNVVDTLPLARQLFPGKKNSLDALCNRYKINVSHRDFHSALIDAKLLAKVYTFMTSFQQSISIFDKNSNLNSIQKNAKLDSRVPFRSTLLLATKDELQQHMKYLKYVKQETGNCVWLEDKYN.

2 residues coordinate a divalent metal cation: Asp-11 and Glu-13. The substrate site is built by Asp-11, Glu-13, Gln-60, and His-65. Catalysis depends on His-161, which acts as the Proton acceptor. Residue Asp-166 coordinates a divalent metal cation. Asp-166 provides a ligand contact to substrate.

In terms of assembly, the DNA polymerase holoenzyme is a complex that contains 10 different types of subunits. These subunits are organized into 3 functionally essential subassemblies: the pol III core, the beta sliding clamp processivity factor and the clamp-loading complex. The pol III core (subunits alpha,epsilon and theta) contains the polymerase and the 3'-5' exonuclease proofreading activities. The polymerase is tethered to the template via the sliding clamp processivity factor. The clamp-loading complex assembles the beta processivity factor onto the primer template and plays a central role in the organization and communication at the replication fork. This complex contains delta, delta', psi and chi, and copies of either or both of two different DnaX proteins, gamma and tau. The composition of the holoenzyme is, therefore: (alpha,epsilon,theta)[2]-(gamma/tau)[3]-delta,delta', psi,chi-beta[4]. The cofactor is Mg(2+). Requires Mn(2+) as cofactor.

It catalyses the reaction DNA(n) + a 2'-deoxyribonucleoside 5'-triphosphate = DNA(n+1) + diphosphate. DNA polymerase III is a complex, multichain enzyme responsible for most of the replicative synthesis in bacteria. The epsilon subunit contain the editing function and is a proofreading 3'-5' exonuclease. This Buchnera aphidicola subsp. Baizongia pistaciae (strain Bp) protein is DNA polymerase III subunit epsilon (dnaQ).